A 291-amino-acid polypeptide reads, in one-letter code: Bifunctional protein FolD (291 aa).

NADP(+) contacts are provided by residues Gly-168–Gly-170, Thr-195, and Val-236.

The protein belongs to the tetrahydrofolate dehydrogenase/cyclohydrolase family. In terms of assembly, homodimer.

The catalysed reaction is (6R)-5,10-methylene-5,6,7,8-tetrahydrofolate + NADP(+) = (6R)-5,10-methenyltetrahydrofolate + NADPH. It catalyses the reaction (6R)-5,10-methenyltetrahydrofolate + H2O = (6R)-10-formyltetrahydrofolate + H(+). Its pathway is one-carbon metabolism; tetrahydrofolate interconversion. Catalyzes the oxidation of 5,10-methylenetetrahydrofolate to 5,10-methenyltetrahydrofolate and then the hydrolysis of 5,10-methenyltetrahydrofolate to 10-formyltetrahydrofolate. The protein is Bifunctional protein FolD of Bifidobacterium longum (strain DJO10A).